We begin with the raw amino-acid sequence, 85 residues long: MEKLTVLILVATVLLTIQVLGQSDRDKHLKRRPKQYATKRLSARMRGHRQCTGAGYECEETPECCPNLTCKCSGSPLCTRYSCQA.

An N-terminal signal peptide occupies residues 1 to 23 (MEKLTVLILVATVLLTIQVLGQS). The propeptide occupies 24-49 (DRDKHLKRRPKQYATKRLSARMRGHR). A Pyrrolidone carboxylic acid modification is found at Q50.

The protein belongs to the conotoxin O2 superfamily. Post-translationally, contains 4 disulfide bonds. Expressed by the venom duct.

It is found in the secreted. This chain is Conotoxin Mi15a, found in Conus miles (Soldier cone).